We begin with the raw amino-acid sequence, 940 residues long: Insulin receptor substrate 1 (940 aa).

A PH domain is found at 8–109 (GMVLSGYHKK…WLDKLLLLQR (102 aa)). One can recognise an IRS-type PTB domain in the interval 122-236 (YEHVWQVIIQ…SAMSAKTDSN (115 aa)). Phosphoserine is present on residues Ser-284, Ser-285, and Ser-340. A Phosphotyrosine; by INSR modification is found at Tyr-407. The YXXM motif 1 motif lies at 407–410 (YIPM). The span at 523–540 (NRSQNNISKEGPISGTST) shows a compositional bias: polar residues. Residues 523–549 (NRSQNNISKEGPISGTSTNREKKSTSA) are disordered. Position 548 is a phosphoserine (Ser-548). Positions 639–642 (YLEM) match the YXXM motif 2 motif. Tyr-883 is modified (phosphotyrosine; by INSR). The segment at 895–915 (NPAKYLKRGSRESPPVATCAE) is disordered. Ser-904 and Ser-907 each carry phosphoserine. Tyr-920 bears the Phosphotyrosine; by INSR mark.

Bindings to phosphatidylinositol 3-kinase and SHP2.

Functionally, activates phosphatidylinositol 3-kinase when bound to the regulatory p85 subunit. May mediate the control of various cellular processes by insulin-like peptides. When phosphorylated by the insulin receptor binds specifically to various cellular proteins containing SH2 domains. Involved in control of cell proliferation, cell size, and body and organ growth throughout development. Also has a role in a signaling pathway controlling the physiological response required to endure periods of low nutrient conditions. Insulin/insulin-like growth factor (IGF) signaling pathway has a role in regulating aging and is necessary in the ovary for vitellogenic maturation. This chain is Insulin receptor substrate 1, found in Drosophila ananassae (Fruit fly).